A 375-amino-acid polypeptide reads, in one-letter code: Elongation factor Tu (375 aa).

In terms of domain architecture, tr-type G spans 10 to 205 (KPHINVGAIG…TMDKYFVIPE (196 aa)). Residues 19–26 (GHVDHGKT) form a G1 region. 19-26 (GHVDHGKT) is a binding site for GTP. Thr26 serves as a coordination point for Mg(2+). Residues 60–64 (GITIN) are G2. The G3 stretch occupies residues 81–84 (DCPG). Residues 81–85 (DCPGH) and 136–139 (NKMD) each bind GTP. A G4 region spans residues 136 to 139 (NKMD). The G5 stretch occupies residues 173–175 (SAF).

Belongs to the TRAFAC class translation factor GTPase superfamily. Classic translation factor GTPase family. EF-Tu/EF-1A subfamily. Monomer.

It localises to the cytoplasm. It carries out the reaction GTP + H2O = GDP + phosphate + H(+). GTP hydrolase that promotes the GTP-dependent binding of aminoacyl-tRNA to the A-site of ribosomes during protein biosynthesis. In Spirochaeta aurantia, this protein is Elongation factor Tu (tuf).